Reading from the N-terminus, the 506-residue chain is Parthenolide synthase (506 aa).

Residues 10 to 30 (LFLPTLCTILISYIIIKYVLI) traverse the membrane as a helical segment. 5 N-linked (GlcNAc...) asparagine glycosylation sites follow: N32, N63, N121, N168, and N175. The chain crosses the membrane as a helical span at residues 301–321 (LLLNVLLGAIDTTFTTIVWAM). Heme is bound at residue C448.

It belongs to the cytochrome P450 family.

The protein localises to the membrane. It carries out the reaction (+)-costunolide + reduced [NADPH--hemoprotein reductase] + O2 = parthenolide + oxidized [NADPH--hemoprotein reductase] + H2O + H(+). It functions in the pathway secondary metabolite biosynthesis; terpenoid biosynthesis. Functionally, involved in the biosynthesis of germacrene-derived sesquiterpene lactones. Component of the parthenolide biosynthetic pathway; parthenolide and conjugates are promising anti-cancer drugs highly active against colon cancer cells. Catalyzes the conversion of costunolide to parthenolide. The chain is Parthenolide synthase from Tanacetum parthenium (Feverfew).